Here is a 1328-residue protein sequence, read N- to C-terminus: Protein turtle homolog B (1328 aa).

The signal sequence occupies residues 1-20; it reads MIWYVATLIASVISTRGLVA. At 21–722 the chain is on the extracellular side; sequence QVAHGLREEP…DLTDDGLARP (702 aa). Ig-like domains lie at 30-115, 139-226, 228-320, 324-415, and 420-504; these read PEFV…ECKV, PTFT…LLVQ, PPFI…AYLT, PARV…ARLV, and PYFT…THLT. Cystine bridges form between cysteine 45–cysteine 113 and cysteine 161–cysteine 208. N-linked (GlcNAc...) asparagine glycans are attached at residues asparagine 241 and asparagine 258. Disulfide bonds link cysteine 250/cysteine 303, cysteine 346/cysteine 397, and cysteine 442/cysteine 488. 2 consecutive Fibronectin type-III domains span residues 512–604 and 614–708; these read APGS…TLAF and LVTP…STDI. Asparagine 624 carries N-linked (GlcNAc...) asparagine glycosylation. Residues 723 to 743 traverse the membrane as a helical segment; sequence VLAGIVATICFLAAAILFSTL. Residues 744 to 1328 lie on the Cytoplasmic side of the membrane; sequence AACFVNKQRK…EPPTTLPTSG (585 aa). Disordered regions lie at residues 758 to 817, 914 to 1040, and 1107 to 1328; these read RKKD…EKEL, PMSS…PEPW, and SPGR…PTSG. Residues serine 775, serine 783, and serine 794 each carry the phosphoserine modification. Over residues 990–1001 the composition is skewed to low complexity; it reads SPLSSVMSSPPL. 3 stretches are compositionally biased toward polar residues: residues 1018-1033, 1129-1141, and 1199-1214; these read ENAS…TPTG, LVSQ…TSQG, and SRLS…SRTG. At arginine 1136 the chain carries Omega-N-methylarginine. Serine 1207 and serine 1215 each carry phosphoserine. Residues 1246–1273 are compositionally biased toward low complexity; it reads SFSRKSTPSSTGSPSQSSRSGSPSYRPT. Composition is skewed to pro residues over residues 1284–1295 and 1318–1328; these read PSPPPGPAPPAP and PEPPTTLPTSG.

This sequence belongs to the immunoglobulin superfamily. Turtle family. Found in a complex with MAGI2 and NLGN2, where it interacts with MAGI2 (via PDZ 5 and PDZ 6 domains). In terms of processing, N-glycosylated and sialylated. Not significantly O-glycosylated. In terms of tissue distribution, detected primarily in brain, including cortex, hippocampus, cerebellum and striatum. Largely restricted to inhibitory GABAergic interneurons (at protein level).

It localises to the postsynaptic cell membrane. The protein resides in the postsynaptic density. In terms of biological role, transmembrane protein which is abundantly expressed in interneurons, where it may regulate inhibitory synapse development. May mediate homophilic cell adhesion. This is Protein turtle homolog B from Rattus norvegicus (Rat).